Reading from the N-terminus, the 303-residue chain is Cilia- and flagella-associated protein 161 (303 aa).

In terms of assembly, microtubule inner protein component of sperm flagellar doublet microtubules.

The protein resides in the cytoplasm. It is found in the cytoskeleton. It localises to the cilium axoneme. The protein localises to the flagellum axoneme. In terms of biological role, microtubule inner protein (MIP) part of the dynein-decorated doublet microtubules (DMTs) in cilia axoneme, which is required for motile cilia beating. The protein is Cilia- and flagella-associated protein 161 of Mus musculus (Mouse).